A 238-amino-acid polypeptide reads, in one-letter code: Adapter protein MecA (238 aa).

Residues 108 to 133 (EDENEESVQGNQQQRRSHASDHSKRA) form a disordered region.

This sequence belongs to the MecA family. Homodimer.

Its function is as follows. Enables the recognition and targeting of unfolded and aggregated proteins to the ClpC protease or to other proteins involved in proteolysis. In Staphylococcus carnosus (strain TM300), this protein is Adapter protein MecA.